The primary structure comprises 372 residues: 4-hydroxy-3-methylbut-2-en-1-yl diphosphate synthase (flavodoxin) (372 aa).

Positions 270, 273, 305, and 312 each coordinate [4Fe-4S] cluster.

This sequence belongs to the IspG family. The cofactor is [4Fe-4S] cluster.

It catalyses the reaction (2E)-4-hydroxy-3-methylbut-2-enyl diphosphate + oxidized [flavodoxin] + H2O + 2 H(+) = 2-C-methyl-D-erythritol 2,4-cyclic diphosphate + reduced [flavodoxin]. The protein operates within isoprenoid biosynthesis; isopentenyl diphosphate biosynthesis via DXP pathway; isopentenyl diphosphate from 1-deoxy-D-xylulose 5-phosphate: step 5/6. Its function is as follows. Converts 2C-methyl-D-erythritol 2,4-cyclodiphosphate (ME-2,4cPP) into 1-hydroxy-2-methyl-2-(E)-butenyl 4-diphosphate. This chain is 4-hydroxy-3-methylbut-2-en-1-yl diphosphate synthase (flavodoxin), found in Escherichia coli (strain SMS-3-5 / SECEC).